The following is a 216-amino-acid chain: Nicotinamidase (216 aa).

The active site involves Asp-8. The Zn(2+) site is built by Asp-51, His-53, and His-94. Residue Lys-122 is part of the active site. Cys-167 acts as the Nucleophile in catalysis.

This sequence belongs to the isochorismatase family.

The protein resides in the cytoplasm. It is found in the nucleus. It localises to the peroxisome. The enzyme catalyses nicotinamide + H2O = nicotinate + NH4(+). It functions in the pathway cofactor biosynthesis; nicotinate biosynthesis; nicotinate from nicotinamide: step 1/1. Its activity is regulated as follows. Inhibited by N-ethylmaleimide, HgCl(2) and PCMB. Competitively inhibited by NAD, NMN and 3-acetylpyridine. Catalyzes the deamidation of nicotinamide, an early step in the NAD(+) salvage pathway. Positively regulates SIR2-mediated silencing and longevity by preventing the accumulation of intracellular nicotinamide, an inhibitor of SIR2, during times of stress. Also acts on nicotinyl hydroxamate. In Saccharomyces cerevisiae (strain ATCC 204508 / S288c) (Baker's yeast), this protein is Nicotinamidase (PNC1).